The sequence spans 503 residues: ATP synthase subunit alpha (503 aa).

170 to 177 (GDRQTGKT) provides a ligand contact to ATP.

It belongs to the ATPase alpha/beta chains family. In terms of assembly, F-type ATPases have 2 components, CF(1) - the catalytic core - and CF(0) - the membrane proton channel. CF(1) has five subunits: alpha(3), beta(3), gamma(1), delta(1), epsilon(1). CF(0) has three main subunits: a(1), b(2) and c(9-12). The alpha and beta chains form an alternating ring which encloses part of the gamma chain. CF(1) is attached to CF(0) by a central stalk formed by the gamma and epsilon chains, while a peripheral stalk is formed by the delta and b chains.

The protein resides in the cell inner membrane. It catalyses the reaction ATP + H2O + 4 H(+)(in) = ADP + phosphate + 5 H(+)(out). Its function is as follows. Produces ATP from ADP in the presence of a proton gradient across the membrane. The alpha chain is a regulatory subunit. The chain is ATP synthase subunit alpha from Geobacter metallireducens (strain ATCC 53774 / DSM 7210 / GS-15).